Reading from the N-terminus, the 97-residue chain is Putative septation protein SpoVG (97 aa).

Belongs to the SpoVG family.

Functionally, essential for sporulation. Interferes with or is a negative regulator of the pathway leading to asymmetric septation. This chain is Putative septation protein SpoVG, found in Bacillus licheniformis (strain ATCC 14580 / DSM 13 / JCM 2505 / CCUG 7422 / NBRC 12200 / NCIMB 9375 / NCTC 10341 / NRRL NRS-1264 / Gibson 46).